Here is a 59-residue protein sequence, read N- to C-terminus: Large ribosomal subunit protein bL32C (59 aa).

It belongs to the bacterial ribosomal protein bL32 family.

In Enterococcus faecalis (strain ATCC 700802 / V583), this protein is Large ribosomal subunit protein bL32C (rpmF3).